The primary structure comprises 462 residues: Cysteine--tRNA ligase (462 aa).

Cys-24 lines the Zn(2+) pocket. Residues 26–36 carry the 'HIGH' region motif; that stretch reads PTVYDDAHLGH. Zn(2+) contacts are provided by Cys-199, His-224, and Glu-228. The 'KMSKS' region signature appears at 256–260; it reads KMSKS. Lys-259 is a binding site for ATP.

It belongs to the class-I aminoacyl-tRNA synthetase family. In terms of assembly, monomer. The cofactor is Zn(2+).

It is found in the cytoplasm. It catalyses the reaction tRNA(Cys) + L-cysteine + ATP = L-cysteinyl-tRNA(Cys) + AMP + diphosphate. In Campylobacter jejuni subsp. jejuni serotype O:2 (strain ATCC 700819 / NCTC 11168), this protein is Cysteine--tRNA ligase (cysS).